The chain runs to 263 residues: MQEILNIAAYKFVAIDDSPVLREDLRERAQALGLMGTILLAPEGINLFLAGLPDAVRSFVAGLRADVRFADLETKESWSAAQPFRRMLVKLKREIIRMDHPAIQPAAGRAPGVDAPTLKRWLDQGHDDEGREIALLDTRNDFEVDEGSFDGAIDWRITKFTEFPPALKAHRADFAGKTVVSFCTGGIRCEKAAILMREEGIENVLQLEGGILKYFEEVGGAHYHGDCFVFDGRRALAPDLSARAADASARAAEDVGLSSGLKK.

A Rhodanese domain is found at 129 to 223; sequence EGREIALLDT…YFEEVGGAHY (95 aa). The Cysteine persulfide intermediate role is filled by Cys183.

This sequence belongs to the TrhO family.

The catalysed reaction is uridine(34) in tRNA + AH2 + O2 = 5-hydroxyuridine(34) in tRNA + A + H2O. Functionally, catalyzes oxygen-dependent 5-hydroxyuridine (ho5U) modification at position 34 in tRNAs. The chain is tRNA uridine(34) hydroxylase from Variovorax paradoxus (strain S110).